Consider the following 137-residue polypeptide: Large ribosomal subunit protein uL16 (137 aa).

This sequence belongs to the universal ribosomal protein uL16 family. Part of the 50S ribosomal subunit.

Its function is as follows. Binds 23S rRNA and is also seen to make contacts with the A and possibly P site tRNAs. This is Large ribosomal subunit protein uL16 from Pseudomonas fluorescens (strain Pf0-1).